The following is a 572-amino-acid chain: Transducin-like enhancer protein 6 (572 aa).

Disordered regions lie at residues 1-30 (MTSR…SSPT), 92-121 (QSEE…SSFE), and 174-236 (KAKP…VQEP). Positions 14–30 (KSTSPCPGISNSESSPT) are enriched in polar residues. WD repeat units lie at residues 284-322 (AHGE…AEDR), 332-372 (TPGA…LHVK), 377-416 (CAGL…VVRD), 419-456 (GYPD…KPLE), 458-497 (QFKS…RHMV), 499-538 (QKDS…KVFE), and 540-571 (PEMS…YQIT). S510 is subject to Phosphoserine; by PKA.

It belongs to the WD repeat Groucho/TLE family. Homodimers. Component of the subcortical maternal complex (SCMC), at least composed of NLRP5, KHDC3, OOEP, and TLE6. Within the complex, interacts with NLRP5, KHDC3 and OOEP. The SCMC may facilitate translocation of its components between the nuclear and cytoplasmic compartments. As part of the SCMC interacts with the SCMC-associated protein ZBED3. As part of the SCMC interacts with the SCMC-associated protein NLRP4F. As part of the SCMC interacts with the SCMC-associated protein CFL1/Cofilin-1. Interacts with FOXG1/BF-1; the interaction inhibits TLE1 interaction with FOXG1/BF-1. Interacts with NFATC1. Interacts with PAX6. In terms of assembly, component of the subcortical maternal complex (SCMC), at least composed of NLRP5, KHDC3L, OOEP, and TLE6 isoform 1. Within the complex, interacts with NLRP5, KHDC3L and OOEP. The SCMC may facilitate translocation of its components between the nuclear and cytoplasmic compartments.

The protein resides in the cytoplasm. Its subcellular location is the nucleus. Functionally, component of the subcortical maternal complex (SCMC), a multiprotein complex that plays a key role in early embryonic development. The SCMC complex is a structural constituent of cytoplasmic lattices, which consist in fibrous structures found in the cytoplasm of oocytes and preimplantation embryos. They are required to store maternal proteins critical for embryonic development, such as proteins that control epigenetic reprogramming of the preimplantation embryo, and prevent their degradation or activation. Also required for spermatogenesis: regulates spermatogonia proliferation and cell cycle progression, potentially via regulation of cell cycle regulatory genes such as; CEBPB, CEBPA, CSF3, PCNA, and CDK4. Suppresses FOXG1/BF-1-mediated transcriptional repression by inhibiting interaction of the transcriptional corepressor TLE1 with FOXG1 which promotes cortical neuron differentiation. Acts as a transcriptional corepressor of NFATC1-mediated gene expression by contributing to PAX6-mediated repression. In terms of biological role, component of the subcortical maternal complex (SCMC), a multiprotein complex that plays a key role in early embryonic development. The protein is Transducin-like enhancer protein 6 of Homo sapiens (Human).